A 229-amino-acid chain; its full sequence is Ribonuclease HII (229 aa).

Residues 34–223 enclose the RNase H type-2 domain; the sequence is WPVAGADEAG…LRKVEDGPQM (190 aa). A divalent metal cation-binding residues include Asp-40, Glu-41, and Asp-131.

Belongs to the RNase HII family. Requires Mn(2+) as cofactor. It depends on Mg(2+) as a cofactor.

The protein localises to the cytoplasm. It carries out the reaction Endonucleolytic cleavage to 5'-phosphomonoester.. Functionally, endonuclease that specifically degrades the RNA of RNA-DNA hybrids. This chain is Ribonuclease HII, found in Rhizobium leguminosarum bv. trifolii (strain WSM2304).